A 62-amino-acid chain; its full sequence is Large ribosomal subunit protein bL28 (62 aa).

Belongs to the bacterial ribosomal protein bL28 family.

The chain is Large ribosomal subunit protein bL28 from Thermobifida fusca (strain YX).